Reading from the N-terminus, the 401-residue chain is L-rhamnonate dehydratase (401 aa).

Substrate is bound by residues His-29 and Arg-55. The Mg(2+) site is built by Asp-222, Glu-248, and Glu-276. Residue His-325 is the Proton acceptor of the active site. Glu-345 lines the substrate pocket.

It belongs to the mandelate racemase/muconate lactonizing enzyme family. RhamD subfamily. In terms of assembly, homooctamer; tetramer of dimers. Requires Mg(2+) as cofactor.

The catalysed reaction is L-rhamnonate = 2-dehydro-3-deoxy-L-rhamnonate + H2O. Its function is as follows. Catalyzes the dehydration of L-rhamnonate to 2-keto-3-deoxy-L-rhamnonate (KDR). This chain is L-rhamnonate dehydratase, found in Klebsiella pneumoniae subsp. pneumoniae (strain ATCC 700721 / MGH 78578).